The primary structure comprises 96 residues: Co-chaperonin GroES (96 aa).

Belongs to the GroES chaperonin family. As to quaternary structure, heptamer of 7 subunits arranged in a ring. Interacts with the chaperonin GroEL.

Its subcellular location is the cytoplasm. Its function is as follows. Together with the chaperonin GroEL, plays an essential role in assisting protein folding. The GroEL-GroES system forms a nano-cage that allows encapsulation of the non-native substrate proteins and provides a physical environment optimized to promote and accelerate protein folding. GroES binds to the apical surface of the GroEL ring, thereby capping the opening of the GroEL channel. The protein is Co-chaperonin GroES of Trichlorobacter lovleyi (strain ATCC BAA-1151 / DSM 17278 / SZ) (Geobacter lovleyi).